A 124-amino-acid polypeptide reads, in one-letter code: Small ribosomal subunit protein uS11 (124 aa).

This sequence belongs to the universal ribosomal protein uS11 family. As to quaternary structure, part of the 30S ribosomal subunit. Interacts with proteins S7 and S18. Binds to IF-3.

Its function is as follows. Located on the platform of the 30S subunit, it bridges several disparate RNA helices of the 16S rRNA. Forms part of the Shine-Dalgarno cleft in the 70S ribosome. The protein is Small ribosomal subunit protein uS11 of Anaplasma phagocytophilum (strain HZ).